A 141-amino-acid polypeptide reads, in one-letter code: Nucleoside diphosphate kinase (141 aa).

Residues lysine 11, phenylalanine 59, arginine 87, threonine 93, arginine 104, and asparagine 114 each coordinate ATP. Histidine 117 (pros-phosphohistidine intermediate) is an active-site residue.

It belongs to the NDK family. As to quaternary structure, homotetramer. Mg(2+) serves as cofactor.

The protein resides in the cytoplasm. It catalyses the reaction a 2'-deoxyribonucleoside 5'-diphosphate + ATP = a 2'-deoxyribonucleoside 5'-triphosphate + ADP. The catalysed reaction is a ribonucleoside 5'-diphosphate + ATP = a ribonucleoside 5'-triphosphate + ADP. Its function is as follows. Major role in the synthesis of nucleoside triphosphates other than ATP. The ATP gamma phosphate is transferred to the NDP beta phosphate via a ping-pong mechanism, using a phosphorylated active-site intermediate. The polypeptide is Nucleoside diphosphate kinase (Histophilus somni (strain 129Pt) (Haemophilus somnus)).